The primary structure comprises 927 residues: MALKSPAFRKKFPLLVTGSLLAMQPLATQFVVAAEQYDCSVSASGAWNCAPKSTAAAVELPPRPVHSTASVSSNGTVTSESSSSGEQVAGPQLVTEAKGKGLKSRSADYSHLDWVPREKLTAAQLAETGPYCSGAYVEPIRPGMDDKTPMKDAPMFVGAKASRYEQEAQVATLAGDVVLRQGSMQVQAQEAALHQAENRGELNGDVRLRDNGALIVGDKAELQLDTGEARVDNAEYVLHKSNIRGNALYAKRAENAIIRLKDGTYTTCEPNSNAWTLKGNNITLNPATGFGTATNVTLRVKDIPVLYTPYIYFPIDDRRQSGFLPPTIAAGGDNGFTLVTPYYFNLAPNYDATLYPRYMADRGLLMEGEFRYLTKGSEGQFGGAYLNDENDDRKLQSDYDKTRWMINWHHKGGLDTRWLTQVDYTDISDPYYFQDLETDQIGVKRTDFLNQQGSLTYRGDSYSAVFNAQAYKLATVANVTPYNRLPQLTLNGTLPYNPEGLKFDYQTEAVRFDRDLRTGTFVDENGNFESRLDNNISGLDRANGDRLNLAPSVSLPMNWSYGFLTPKVKYVYTQYDLSLDGTGKSQLAASGGTFDSSVNRSVPIFSVDSGLYFDRNTNWFGKDYRQTLEPRLFYLYVPEKDQTDIPAFDTSESTFSYSSLFRDNRFTGSDRIGDENKLSLGITNRWIEDNGFERQRFAIGQAIYFSDRKVQLPGVSFADRDDAKANVSPYALEYEYRFNRDWRFNSDFNWDPDSKSTRSGSAMFHYQPEAEPNKIVNFGYRYRNDQIRYDESTGRWIVGGGDYGRPGDPNYVKDYYKIQQHDFSVIWPIVPQWSLISRWQYDYNRERTIEAFGGFEYDNCCWKMRLVNRYWIDYDEFSQAAPQNEKGDRGIFLQIVLKGLGGVTGAKVDSFLDKGIQGYREREDQAF.

The signal sequence occupies residues 1–22 (MALKSPAFRKKFPLLVTGSLLA). The interval 60-100 (LPPRPVHSTASVSSNGTVTSESSSSGEQVAGPQLVTEAKGK) is disordered. Low complexity predominate over residues 70–86 (SVSSNGTVTSESSSSGE).

The protein belongs to the LptD family. As to quaternary structure, component of the lipopolysaccharide transport and assembly complex. Interacts with LptE and LptA.

The protein resides in the cell outer membrane. Functionally, together with LptE, is involved in the assembly of lipopolysaccharide (LPS) at the surface of the outer membrane. This Pseudomonas syringae pv. tomato (strain ATCC BAA-871 / DC3000) protein is LPS-assembly protein LptD.